Consider the following 426-residue polypeptide: Enolase (426 aa).

(2R)-2-phosphoglycerate is bound at residue glutamine 163. Glutamate 205 functions as the Proton donor in the catalytic mechanism. Aspartate 242, glutamate 286, and aspartate 313 together coordinate Mg(2+). Residues lysine 338, arginine 367, serine 368, and lysine 389 each contribute to the (2R)-2-phosphoglycerate site. Lysine 338 serves as the catalytic Proton acceptor.

Belongs to the enolase family. Mg(2+) is required as a cofactor.

The protein resides in the cytoplasm. It is found in the secreted. Its subcellular location is the cell surface. It catalyses the reaction (2R)-2-phosphoglycerate = phosphoenolpyruvate + H2O. It functions in the pathway carbohydrate degradation; glycolysis; pyruvate from D-glyceraldehyde 3-phosphate: step 4/5. Catalyzes the reversible conversion of 2-phosphoglycerate (2-PG) into phosphoenolpyruvate (PEP). It is essential for the degradation of carbohydrates via glycolysis. The chain is Enolase from Helicobacter acinonychis (strain Sheeba).